The chain runs to 97 residues: uncharacterized protein (97 aa).

Disordered regions lie at residues Met-1–Asp-20 and Val-52–Ala-97.

This is an uncharacterized protein from Paracoccus pantotrophus (Thiosphaera pantotropha).